Consider the following 311-residue polypeptide: Thymidylate synthase (311 aa).

Residues arginine 28 and 172-173 (RR) contribute to the dUMP site. The active-site Nucleophile is the cysteine 192. DUMP contacts are provided by residues 213–216 (RSCD), asparagine 224, and 254–256 (HLY). Aspartate 216 provides a ligand contact to (6R)-5,10-methylene-5,6,7,8-tetrahydrofolate. Residue alanine 310 participates in (6R)-5,10-methylene-5,6,7,8-tetrahydrofolate binding.

The protein belongs to the thymidylate synthase family. Bacterial-type ThyA subfamily. As to quaternary structure, homodimer.

It is found in the cytoplasm. The enzyme catalyses dUMP + (6R)-5,10-methylene-5,6,7,8-tetrahydrofolate = 7,8-dihydrofolate + dTMP. It participates in pyrimidine metabolism; dTTP biosynthesis. Catalyzes the reductive methylation of 2'-deoxyuridine-5'-monophosphate (dUMP) to 2'-deoxythymidine-5'-monophosphate (dTMP) while utilizing 5,10-methylenetetrahydrofolate (mTHF) as the methyl donor and reductant in the reaction, yielding dihydrofolate (DHF) as a by-product. This enzymatic reaction provides an intracellular de novo source of dTMP, an essential precursor for DNA biosynthesis. The polypeptide is Thymidylate synthase (Sphingopyxis alaskensis (strain DSM 13593 / LMG 18877 / RB2256) (Sphingomonas alaskensis)).